A 562-amino-acid chain; its full sequence is Pyruvate kinase isozyme G, chloroplastic (562 aa).

Arginine 121 is a binding site for substrate. K(+) is bound by residues asparagine 123, serine 125, aspartate 156, and threonine 157. 123-126 contacts ATP; the sequence is NMSH. Glutamate 308 contributes to the Mg(2+) binding site. Positions 331, 332, and 364 each coordinate substrate. Aspartate 332 lines the Mg(2+) pocket.

This sequence belongs to the pyruvate kinase family. In terms of assembly, homotetramer. It depends on Mg(2+) as a cofactor. K(+) serves as cofactor. Highest levels in leaves. Also found in stems, roots and flowers.

The protein localises to the plastid. Its subcellular location is the chloroplast. The enzyme catalyses pyruvate + ATP = phosphoenolpyruvate + ADP + H(+). The protein operates within carbohydrate degradation; glycolysis; pyruvate from D-glyceraldehyde 3-phosphate: step 5/5. This Nicotiana tabacum (Common tobacco) protein is Pyruvate kinase isozyme G, chloroplastic.